The primary structure comprises 140 residues: Profilin-1 (140 aa).

Residue Ala-2 is modified to N-acetylalanine. Phosphoserine is present on Ser-28. Lys-54 is covalently cross-linked (Glycyl lysine isopeptide (Lys-Gly) (interchain with G-Cter in SUMO2); alternate). A Glycyl lysine isopeptide (Lys-Gly) (interchain with G-Cter in ubiquitin); alternate cross-link involves residue Lys-54. At Ser-57 the chain carries Phosphoserine. Residue Lys-108 is modified to N6-acetyllysine. A Phosphotyrosine modification is found at Tyr-129. Ser-138 bears the Phosphoserine; by ROCK1 mark.

Belongs to the profilin family. Found in a complex with XPO6, Ran, ACTB and PFN1. Interacts with ACTB. Interacts with VASP. Interacts with HTT. Interacts with SH3BGRL. Occurs in many kinds of cells as a complex with monomeric actin in a 1:1 ratio. Interacts with ACTMAP. Phosphorylation at Ser-138 reduces its affinity for G-actin and blocks its interaction with HTT, reducing its ability to inhibit androgen receptor (AR) and HTT aggregation.

Its subcellular location is the cytoplasm. It localises to the cytoskeleton. Binds to actin and affects the structure of the cytoskeleton. At high concentrations, profilin prevents the polymerization of actin, whereas it enhances it at low concentrations. By binding to PIP2, it inhibits the formation of IP3 and DG. Inhibits androgen receptor (AR) and HTT aggregation and binding of G-actin is essential for its inhibition of AR. This is Profilin-1 (PFN1) from Bos taurus (Bovine).